A 632-amino-acid chain; its full sequence is MSEESHPNERHMTPRKLFYLALGSVGVVYGDIGTSPLYAFREALKPVAHDGVTRFEVISLISLMIWALTIIVTIKYVLFLLRADNDGEGGTLSLLALLMKTANGHTAILMLLGLMGAALFLGDAMITPALSVLSAVEGLKLVTPRLADYIVPISVVILALLFVVQSRGTGAVAKFFGPITAVWFLVMAAAGISHISDDYGILAAFNPYYAVAFLLHEGFYGIVVLGAVFLTVTGAEALYADLGHFGRRPIQWAWFLLVFPALTLNYLGQGALVLGNPMTMSDPFYLMYPKWALLPVVILATAATIIASQAVITGAFSMVRQGINLGFLPRMEILFTSETNTGQIFVPSVNAVLFIGVIFLVLGFKTSDALATAYGISVTGAMVVTSIMAFEFVRARWNWSLPVAVIALAPLVVLEMIFLGANLLKIHDGGYIPIMIATAFTVVMWTWRRGTAILMEKTRHTDIPLASFVSSIERKSEHSPAQVPGTAIFLTSDPESAPAALLHNLKHNHVLHDRNVILTIRTINKPRVPSHDRYRVEQISERFSRVELLFGFMESQNVSQALATLRKTGLKFDIMSTSFYLGRRKLVPDAKSGMPHWQDRLYIALANAAANPSDYFRLPANRVVELGSHVII.

12 consecutive transmembrane segments (helical) span residues 17–37 (LFYLALGSVGVVYGDIGTSPL), 60–80 (LISLMIWALTIIVTIKYVLFL), 106–126 (TAILMLLGLMGAALFLGDAMI), 146–166 (LADYIVPISVVILALLFVVQS), 175–195 (FFGPITAVWFLVMAAAGISHI), 210–230 (AVAFLLHEGFYGIVVLGAVFL), 254–274 (WFLLVFPALTLNYLGQGALVL), 292–312 (ALLPVVILATAATIIASQAVI), 344–364 (IFVPSVNAVLFIGVIFLVLGF), 370–390 (LATAYGISVTGAMVVTSIMAF), 401–421 (LPVAVIALAPLVVLEMIFLGA), and 426–446 (IHDGGYIPIMIATAFTVVMWT).

Belongs to the HAK/KUP transporter (TC 2.A.72) family.

It localises to the cell inner membrane. The enzyme catalyses K(+)(in) + H(+)(in) = K(+)(out) + H(+)(out). Functionally, transport of potassium into the cell. Likely operates as a K(+):H(+) symporter. The chain is Probable potassium transport system protein Kup 1 from Rhizobium johnstonii (strain DSM 114642 / LMG 32736 / 3841) (Rhizobium leguminosarum bv. viciae).